The sequence spans 358 residues: Uptake hydrogenase small subunit (358 aa).

The segment at residues M1 to A45 is a signal peptide (tat-type signal). Residues C62, C65, C160, C194, H232, C235, C260, and C266 each coordinate [4Fe-4S] cluster. [3Fe-4S] cluster contacts are provided by C275, C294, and C297.

This sequence belongs to the [NiFe]/[NiFeSe] hydrogenase small subunit family. As to quaternary structure, heterodimer of a large and a small subunit. [4Fe-4S] cluster is required as a cofactor. The cofactor is [3Fe-4S] cluster. In terms of processing, predicted to be exported by the Tat system. The position of the signal peptide cleavage has been experimentally proven.

It localises to the cell membrane. It carries out the reaction H2 + A = AH2. This enzyme recycles the H(2) produced by nitrogenase to increase the production of ATP and to protect nitrogenase against inhibition or damage by O(2) under carbon- or phosphate-limited conditions. The chain is Uptake hydrogenase small subunit (hoxK) from Azotobacter vinelandii.